Reading from the N-terminus, the 84-residue chain is Putative defensin-like protein 101 (84 aa).

The N-terminal stretch at Met1–Ala27 is a signal peptide. Cystine bridges form between Cys39–Cys81, Cys43–Cys67, Cys52–Cys79, and Cys56–Cys80.

Belongs to the DEFL family.

It localises to the secreted. This chain is Putative defensin-like protein 101, found in Arabidopsis thaliana (Mouse-ear cress).